The sequence spans 259 residues: 3-deoxy-manno-octulosonate cytidylyltransferase (259 aa).

It belongs to the KdsB family.

It localises to the cytoplasm. The catalysed reaction is 3-deoxy-alpha-D-manno-oct-2-ulosonate + CTP = CMP-3-deoxy-beta-D-manno-octulosonate + diphosphate. It functions in the pathway nucleotide-sugar biosynthesis; CMP-3-deoxy-D-manno-octulosonate biosynthesis; CMP-3-deoxy-D-manno-octulosonate from 3-deoxy-D-manno-octulosonate and CTP: step 1/1. It participates in bacterial outer membrane biogenesis; lipopolysaccharide biosynthesis. Activates KDO (a required 8-carbon sugar) for incorporation into bacterial lipopolysaccharide in Gram-negative bacteria. This Alkalilimnicola ehrlichii (strain ATCC BAA-1101 / DSM 17681 / MLHE-1) protein is 3-deoxy-manno-octulosonate cytidylyltransferase.